A 385-amino-acid polypeptide reads, in one-letter code: Elongation factor Ts, mitochondrial (385 aa).

A mitochondrion-targeting transit peptide spans 1–50; it reads MAWSQSARKPMIGLLFRAQQHGARGYSYSAFQAHLSSSNVDQSATLLRRF.

The protein belongs to the EF-Ts family.

The protein localises to the mitochondrion. Associates with the EF-Tu.GDP complex and induces the exchange of GDP to GTP. It remains bound to the aminoacyl-tRNA.EF-Tu.GTP complex up to the GTP hydrolysis stage on the ribosome. The chain is Elongation factor Ts, mitochondrial from Oryza sativa subsp. indica (Rice).